A 635-amino-acid polypeptide reads, in one-letter code: Phosphatidylserine decarboxylase proenzyme 2 (635 aa).

The region spanning 20–146 (KLQKFRIHRR…VVQEPESTCK (127 aa)) is the C2 domain. 2 EF-hand domains span residues 174-209 (TERR…FGNL) and 210-245 (VAAN…QQEQ). Positions 187, 189, 191, 193, 198, 223, 225, 227, and 234 each coordinate Ca(2+). Active-site charge relay system; for autoendoproteolytic cleavage activity residues include Asp443, His499, and Ser587. Ser587 functions as the Schiff-base intermediate with substrate; via pyruvic acid; for decarboxylase activity in the catalytic mechanism. At Ser587 the chain carries Pyruvic acid (Ser); by autocatalysis.

The protein belongs to the phosphatidylserine decarboxylase family. PSD-B subfamily. Eukaryotic type II sub-subfamily. In terms of assembly, heterodimer of a large membrane-associated beta subunit and a small pyruvoyl-containing alpha subunit. Requires pyruvate as cofactor. Is synthesized initially as an inactive proenzyme. Formation of the active enzyme involves a self-maturation process in which the active site pyruvoyl group is generated from an internal serine residue via an autocatalytic post-translational modification. Two non-identical subunits are generated from the proenzyme in this reaction, and the pyruvate is formed at the N-terminus of the alpha chain, which is derived from the carboxyl end of the proenzyme. The autoendoproteolytic cleavage occurs by a canonical serine protease mechanism, in which the side chain hydroxyl group of the serine supplies its oxygen atom to form the C-terminus of the beta chain, while the remainder of the serine residue undergoes an oxidative deamination to produce ammonia and the pyruvoyl prosthetic group on the alpha chain. During this reaction, the Ser that is part of the protease active site of the proenzyme becomes the pyruvoyl prosthetic group, which constitutes an essential element of the active site of the mature decarboxylase. In terms of tissue distribution, highly expressed in flowers and at lower levels in leaves.

It is found in the vacuole membrane. The enzyme catalyses a 1,2-diacyl-sn-glycero-3-phospho-L-serine + H(+) = a 1,2-diacyl-sn-glycero-3-phosphoethanolamine + CO2. It functions in the pathway phospholipid metabolism; phosphatidylethanolamine biosynthesis; phosphatidylethanolamine from CDP-diacylglycerol: step 2/2. Its function is as follows. Catalyzes the formation of phosphatidylethanolamine (PtdEtn) from phosphatidylserine (PtdSer). Plays a central role in phospholipid metabolism and in the interorganelle trafficking of phosphatidylserine. Contributes only to a minor proportion of PtdEtn production. This is Phosphatidylserine decarboxylase proenzyme 2 (PSD2) from Arabidopsis thaliana (Mouse-ear cress).